Here is a 1162-residue protein sequence, read N- to C-terminus: Leptin receptor (1162 aa).

The signal sequence occupies residues 1–21; that stretch reads MTCQKFYVVLLHWEFLYVITA. The Extracellular segment spans residues 22-839; it reads LNLAYPTSPW…DIAKQQNDAG (818 aa). Cystine bridges form between C37–C90, C89–C99, C131–C142, C186–C195, and C188–C193. Residues N55, N56, N73, and N98 are each glycosylated (N-linked (GlcNAc...) asparagine). An N-linked (GlcNAc...) asparagine glycan is attached at N187. The Fibronectin type-III 1 domain maps to 238–331; it reads PPLGLRMEVT…LPQLFTTQDV (94 aa). N-linked (GlcNAc...) asparagine glycosylation is found at N275, N345, and N356. 2 disulfides stabilise this stretch: C350-C410 and C411-C416. Residue N431 is glycosylated (N-linked (GlcNAc...) asparagine). Cystine bridges form between C434-C445, C471-C526, and C486-C496. The leptin-binding stretch occupies residues 465 to 482; the sequence is HRRSLYCPDNPSIRPTSE. N-linked (GlcNAc...) asparagine glycosylation is found at N514, N622, N657, N668, N686, N695, N698, and N726. 3 consecutive Fibronectin type-III domains span residues 537–632, 637–729, and 738–831; these read PPSN…TLVM, PMRG…NLTF, and AVQS…KDDI. The WSXWS motif motif lies at 620–624; it reads WSNWS. Residues 840–860 form a helical membrane-spanning segment; the sequence is LYVIVPIIISSCVLLLGTLLI. The Cytoplasmic segment spans residues 861-1162; it reads SHQRMKKLFW…IENKMCDLTV (302 aa). Positions 869–877 match the Box 1 motif motif; sequence FWDDVPNPK. At S880 the chain carries Phosphoserine. The required for JAK2 activation stretch occupies residues 891–896; it reads ETFEHL. Positions 896-904 are required for STAT3 phosphorylation; sequence LFTKHAESV. Y985 carries the phosphotyrosine; by JAK2 modification. A Phosphotyrosine modification is found at Y1077. At Y1138 the chain carries Phosphotyrosine; by JAK2.

It belongs to the type I cytokine receptor family. Type 2 subfamily. Present as a mixture of monomers and dimers. The phosphorylated receptor binds a number of SH2 domain-containing proteins such as JAK2, STAT3, PTPN11, and SOCS3. Interaction with SOCS3 inhibits JAK/STAT signaling and MAPK cascade. On ligand binding, phosphorylated on two conserved C-terminal tyrosine residues (isoform B only) by JAK2. Tyr-985 is required for complete binding and activation of PTPN11, ERK/FOS activation,for interaction with SOCS3 and SOCS3 mediated inhibition of leptin signaling. Phosphorylation on Tyr-1138 is required for STAT3 binding/activation. Phosphorylation of Tyr-1077 has a more accessory role. Isoform B is expressed in kidney, liver, lung, ovary, spleen and uterus. Increased level in uterus during gestation. Isoform A and isoform C are predominantly expressed in cerebral microvessels and choroid plexus, with lower levels in cortex, cerebellum and hypothalamus but also liver and lung. Isoform F is expressed at high levels in brain, liver and spleen and less in stomach, kidney, thymus, heart, lung and hypothalamus.

It is found in the cell membrane. The protein resides in the basolateral cell membrane. The protein localises to the secreted. Its function is as follows. Receptor for hormone LEP/leptin. On ligand binding, mediates LEP central and peripheral effects through the activation of different signaling pathways such as JAK2/STAT3 and MAPK cascade/FOS. In the hypothalamus, LEP acts as an appetite-regulating factor that induces a decrease in food intake and an increase in energy consumption by inducing anorexinogenic factors and suppressing orexigenic neuropeptides, also regulates bone mass and secretion of hypothalamo-pituitary-adrenal hormones. In the periphery, increases basal metabolism, influences reproductive function, regulates pancreatic beta-cell function and insulin secretion, is pro-angiogenic and affects innate and adaptive immunity. Control of energy homeostasis and melanocortin production (stimulation of POMC and full repression of AgRP transcription) is mediated by STAT3 signaling, whereas distinct signals regulate NPY and the control of fertility, growth and glucose homeostasis. Involved in the regulation of counter-regulatory response to hypoglycemia by inhibiting neurons of the parabrachial nucleus. Has a specific effect on T lymphocyte responses, differentially regulating the proliferation of naive and memory T-cells. Leptin increases Th1 and suppresses Th2 cytokine production. In terms of biological role, may transport LEP across the blood-brain barrier. Binds LEP and mediates LEP endocytosis. Does not induce phosphorylation of and activate STAT3. Antagonizes Isoform A and isoform B-mediated LEP binding and endocytosis. This Rattus norvegicus (Rat) protein is Leptin receptor (Lepr).